We begin with the raw amino-acid sequence, 386 residues long: Succinate--CoA ligase [ADP-forming] subunit beta (386 aa).

The 236-residue stretch at 9-244 (KEILHKFNVP…YDEEVKEEIE (236 aa)) folds into the ATP-grasp domain. Residues Lys-46, 53–55 (GRG), Glu-99, Ser-102, and Glu-107 contribute to the ATP site. Residues Asn-199 and Asp-213 each coordinate Mg(2+). Substrate contacts are provided by residues Asn-264 and 321–323 (GIM).

It belongs to the succinate/malate CoA ligase beta subunit family. As to quaternary structure, heterotetramer of two alpha and two beta subunits. The cofactor is Mg(2+).

It carries out the reaction succinate + ATP + CoA = succinyl-CoA + ADP + phosphate. It catalyses the reaction GTP + succinate + CoA = succinyl-CoA + GDP + phosphate. It participates in carbohydrate metabolism; tricarboxylic acid cycle; succinate from succinyl-CoA (ligase route): step 1/1. In terms of biological role, succinyl-CoA synthetase functions in the citric acid cycle (TCA), coupling the hydrolysis of succinyl-CoA to the synthesis of either ATP or GTP and thus represents the only step of substrate-level phosphorylation in the TCA. The beta subunit provides nucleotide specificity of the enzyme and binds the substrate succinate, while the binding sites for coenzyme A and phosphate are found in the alpha subunit. The protein is Succinate--CoA ligase [ADP-forming] subunit beta of Wolbachia pipientis subsp. Culex pipiens (strain wPip).